Here is a 123-residue protein sequence, read N- to C-terminus: uncharacterized protein (123 aa).

The disordered stretch occupies residues 34–123; it reads PEKISQTVKK…MNRDGGVKKE (90 aa). Composition is skewed to basic and acidic residues over residues 50 to 60, 74 to 100, and 107 to 123; these read KKIDENKDKSP, TAKD…EFSQ, and EETR…VKKE.

The protein localises to the mitochondrion. This is an uncharacterized protein from Schizosaccharomyces pombe (strain 972 / ATCC 24843) (Fission yeast).